The sequence spans 386 residues: Succinate--CoA ligase [ADP-forming] subunit beta (386 aa).

The ATP-grasp domain maps to 9–244 (KEILHKFNVP…YDEEVKEEIE (236 aa)). Residues Lys-46, 53 to 55 (GRG), Glu-99, Ser-102, and Glu-107 contribute to the ATP site. Mg(2+)-binding residues include Asn-199 and Asp-213. Residues Asn-264 and 321 to 323 (GIM) each bind substrate.

This sequence belongs to the succinate/malate CoA ligase beta subunit family. In terms of assembly, heterotetramer of two alpha and two beta subunits. The cofactor is Mg(2+).

The enzyme catalyses succinate + ATP + CoA = succinyl-CoA + ADP + phosphate. It carries out the reaction GTP + succinate + CoA = succinyl-CoA + GDP + phosphate. It functions in the pathway carbohydrate metabolism; tricarboxylic acid cycle; succinate from succinyl-CoA (ligase route): step 1/1. Its function is as follows. Succinyl-CoA synthetase functions in the citric acid cycle (TCA), coupling the hydrolysis of succinyl-CoA to the synthesis of either ATP or GTP and thus represents the only step of substrate-level phosphorylation in the TCA. The beta subunit provides nucleotide specificity of the enzyme and binds the substrate succinate, while the binding sites for coenzyme A and phosphate are found in the alpha subunit. The protein is Succinate--CoA ligase [ADP-forming] subunit beta of Wolbachia sp. subsp. Brugia malayi (strain TRS).